The sequence spans 485 residues: DNA polymerase subunit gamma-2 (485 aa).

Residues 28–67 form a disordered region; the sequence is RQPEQLSKGTGSFVGPVRSQAELPRNEPREAPESGGEGSE.

In terms of assembly, heterotrimer composed of a catalytic subunit and a homodimer of accessory subunits (POLG:POLG2).

It is found in the mitochondrion. The protein localises to the mitochondrion matrix. Its subcellular location is the mitochondrion nucleoid. Its function is as follows. Accessory subunit of DNA polymerase gamma solely responsible for replication of mitochondrial DNA (mtDNA). Acts as an allosteric regulator of the holoenzyme activities. Enhances the polymerase activity and the processivity of POLG by increasing its interactions with the DNA template. Suppresses POLG exonucleolytic proofreading especially toward homopolymeric templates bearing mismatched termini. Binds to single-stranded DNA. This chain is DNA polymerase subunit gamma-2 (POLG2), found in Bos taurus (Bovine).